A 199-amino-acid polypeptide reads, in one-letter code: ATP-dependent Clp protease proteolytic subunit 2 (199 aa).

Catalysis depends on S98, which acts as the Nucleophile. The active site involves H123.

This sequence belongs to the peptidase S14 family. As to quaternary structure, fourteen ClpP subunits assemble into 2 heptameric rings which stack back to back to give a disk-like structure with a central cavity, resembling the structure of eukaryotic proteasomes.

The protein localises to the cytoplasm. The catalysed reaction is Hydrolysis of proteins to small peptides in the presence of ATP and magnesium. alpha-casein is the usual test substrate. In the absence of ATP, only oligopeptides shorter than five residues are hydrolyzed (such as succinyl-Leu-Tyr-|-NHMec, and Leu-Tyr-Leu-|-Tyr-Trp, in which cleavage of the -Tyr-|-Leu- and -Tyr-|-Trp bonds also occurs).. In terms of biological role, cleaves peptides in various proteins in a process that requires ATP hydrolysis. Has a chymotrypsin-like activity. Plays a major role in the degradation of misfolded proteins. This is ATP-dependent Clp protease proteolytic subunit 2 from Corynebacterium efficiens (strain DSM 44549 / YS-314 / AJ 12310 / JCM 11189 / NBRC 100395).